The following is a 506-amino-acid chain: NAD(P)H-quinone oxidoreductase subunit 2 (506 aa).

Helical transmembrane passes span 14 to 34 (AIIPEAFILLGIVGTLLVDLA), 42 to 62 (WAPSICYLSIGSSLLSLTLQW), 79 to 99 (LAIAFRAIIALSTLVSLLISW), 108 to 128 (PIGEFAAIVLSATLGAMLLCG), 132 to 152 (LISVFISLETLSVASYLLSGY), 167 to 187 (LLVGSAAAAVYLYGSSFLYGL), 206 to 226 (FITSLALVFVLSTVAFKIAAV), 240 to 260 (PTPVVAFLSVGSKTAGFAFAI), 276 to 296 (LLFTILAILSMALGNVVALAQ), 302 to 322 (MLAYSSIGQAGFVMIGIVSGT), 330 to 350 (VLYLAAYLFMNLGAFSCVILF), 374 to 394 (LGLSLCLLSLGGLPPMLGFFG), and 409 to 429 (LLVIVGLVTSVISIYYYISVI).

The protein belongs to the complex I subunit 2 family. As to quaternary structure, NDH-1 can be composed of about 15 different subunits; different subcomplexes with different compositions have been identified which probably have different functions.

It localises to the cellular thylakoid membrane. The catalysed reaction is a plastoquinone + NADH + (n+1) H(+)(in) = a plastoquinol + NAD(+) + n H(+)(out). The enzyme catalyses a plastoquinone + NADPH + (n+1) H(+)(in) = a plastoquinol + NADP(+) + n H(+)(out). Functionally, NDH-1 shuttles electrons from an unknown electron donor, via FMN and iron-sulfur (Fe-S) centers, to quinones in the respiratory and/or the photosynthetic chain. The immediate electron acceptor for the enzyme in this species is believed to be plastoquinone. Couples the redox reaction to proton translocation, and thus conserves the redox energy in a proton gradient. Cyanobacterial NDH-1 also plays a role in inorganic carbon-concentration. The polypeptide is NAD(P)H-quinone oxidoreductase subunit 2 (Prochlorococcus marinus (strain MIT 9301)).